A 465-amino-acid chain; its full sequence is Probable multidrug resistance protein NorM (465 aa).

Transmembrane regions (helical) follow at residues 50–72, 92–114, 127–149, 164–186, 193–215, 248–270, 283–305, 320–342, 393–412, and 422–444; these read MAAI…GLLL, HQVR…LIYH, HLAQ…YLLL, PAMI…FIYG, FGAV…LMIS, GLPI…LLLS, ALNT…TILV, ISYV…TVVL, ILYI…GYIL, and MGPT…LLFY.

Belongs to the multi antimicrobial extrusion (MATE) (TC 2.A.66.1) family.

It localises to the cell inner membrane. Its function is as follows. Multidrug efflux pump. The protein is Probable multidrug resistance protein NorM (norM) of Mannheimia succiniciproducens (strain KCTC 0769BP / MBEL55E).